Consider the following 454-residue polypeptide: Tyrosine aminotransferase (454 aa).

Met-1 is modified (N-acetylmethionine). At Lys-280 the chain carries N6-(pyridoxal phosphate)lysine. The residue at position 448 (Ser-448) is a Phosphoserine.

This sequence belongs to the class-I pyridoxal-phosphate-dependent aminotransferase family. As to quaternary structure, homodimer. It depends on pyridoxal 5'-phosphate as a cofactor.

The enzyme catalyses L-tyrosine + 2-oxoglutarate = 3-(4-hydroxyphenyl)pyruvate + L-glutamate. The protein operates within amino-acid degradation; L-phenylalanine degradation; acetoacetate and fumarate from L-phenylalanine: step 2/6. Transaminase involved in tyrosine breakdown. Converts tyrosine to p-hydroxyphenylpyruvate. Can catalyze the reverse reaction, using glutamic acid, with 2-oxoglutarate as cosubstrate (in vitro). Has much lower affinity and transaminase activity for phenylalanine. This is Tyrosine aminotransferase (Tat) from Mus musculus (Mouse).